A 139-amino-acid polypeptide reads, in one-letter code: uncharacterized protein (139 aa).

A helical membrane pass occupies residues 77 to 97 (YCFFFFLVLFLNGIIATRGKA).

The protein resides in the mitochondrion membrane. This is an uncharacterized protein from Arabidopsis thaliana (Mouse-ear cress).